A 322-amino-acid polypeptide reads, in one-letter code: HPr kinase/phosphorylase (322 aa).

Active-site residues include histidine 146 and lysine 167. ATP is bound at residue 161–168; that stretch reads GDSGLGKS. Serine 168 provides a ligand contact to Mg(2+). Residue aspartate 185 is the Proton acceptor; for phosphorylation activity. Proton donor; for dephosphorylation activity of the active site. The interval 209–218 is important for the catalytic mechanism of both phosphorylation and dephosphorylation; sequence LEVRGLGLLD. Residue glutamate 210 coordinates Mg(2+). Arginine 250 is an active-site residue. The segment at 271-276 is important for the catalytic mechanism of dephosphorylation; that stretch reads QVAAGR.

It belongs to the HPrK/P family. In terms of assembly, homohexamer. It depends on Mg(2+) as a cofactor.

It catalyses the reaction [HPr protein]-L-serine + ATP = [HPr protein]-O-phospho-L-serine + ADP + H(+). It carries out the reaction [HPr protein]-O-phospho-L-serine + phosphate + H(+) = [HPr protein]-L-serine + diphosphate. In terms of biological role, catalyzes the ATP- as well as the pyrophosphate-dependent phosphorylation of a specific serine residue in HPr, a phosphocarrier protein of the phosphoenolpyruvate-dependent sugar phosphotransferase system (PTS). HprK/P also catalyzes the pyrophosphate-producing, inorganic phosphate-dependent dephosphorylation (phosphorolysis) of seryl-phosphorylated HPr (P-Ser-HPr). This Burkholderia ambifaria (strain ATCC BAA-244 / DSM 16087 / CCUG 44356 / LMG 19182 / AMMD) (Burkholderia cepacia (strain AMMD)) protein is HPr kinase/phosphorylase.